The following is a 217-amino-acid chain: Ribulose-phosphate 3-epimerase (217 aa).

Ser7 contributes to the substrate binding site. His32, Asp34, and His65 together coordinate a divalent metal cation. Asp34 serves as the catalytic Proton acceptor. Substrate contacts are provided by residues His65, 141–144, 175–177, and 197–198; these read GFGG, DGG, and GS. Asp175 is a binding site for a divalent metal cation. Catalysis depends on Asp175, which acts as the Proton donor.

This sequence belongs to the ribulose-phosphate 3-epimerase family. The cofactor is a divalent metal cation.

The catalysed reaction is D-ribulose 5-phosphate = D-xylulose 5-phosphate. It functions in the pathway carbohydrate degradation. In terms of biological role, catalyzes the reversible epimerization of D-ribulose 5-phosphate to D-xylulose 5-phosphate. In Bacillus subtilis (strain 168), this protein is Ribulose-phosphate 3-epimerase.